We begin with the raw amino-acid sequence, 292 residues long: tRNA(Ile)-lysidine synthase (292 aa).

Ser-32–Ser-37 contacts ATP.

This sequence belongs to the tRNA(Ile)-lysidine synthase family.

The protein resides in the cytoplasm. The catalysed reaction is cytidine(34) in tRNA(Ile2) + L-lysine + ATP = lysidine(34) in tRNA(Ile2) + AMP + diphosphate + H(+). Functionally, ligates lysine onto the cytidine present at position 34 of the AUA codon-specific tRNA(Ile) that contains the anticodon CAU, in an ATP-dependent manner. Cytidine is converted to lysidine, thus changing the amino acid specificity of the tRNA from methionine to isoleucine. The polypeptide is tRNA(Ile)-lysidine synthase (Corynebacterium diphtheriae (strain ATCC 700971 / NCTC 13129 / Biotype gravis)).